A 185-amino-acid chain; its full sequence is dCTP deaminase, dUMP-forming (185 aa).

DCTP is bound by residues 99–104 (KSSIAR), Asp117, 125–127 (TLE), Gln146, Tyr159, Lys166, and Gln170. The active-site Proton donor/acceptor is Glu127.

It belongs to the dCTP deaminase family. As to quaternary structure, homotrimer.

It carries out the reaction dCTP + 2 H2O = dUMP + NH4(+) + diphosphate. Its pathway is pyrimidine metabolism; dUMP biosynthesis; dUMP from dCTP: step 1/1. In terms of biological role, bifunctional enzyme that catalyzes both the deamination of dCTP to dUTP and the hydrolysis of dUTP to dUMP without releasing the toxic dUTP intermediate. In Methanospirillum hungatei JF-1 (strain ATCC 27890 / DSM 864 / NBRC 100397 / JF-1), this protein is dCTP deaminase, dUMP-forming.